A 216-amino-acid chain; its full sequence is Phosphatidylserine decarboxylase proenzyme (216 aa).

Catalysis depends on serine 185, which acts as the Schiff-base intermediate with substrate; via pyruvic acid. Pyruvic acid (Ser); by autocatalysis is present on serine 185.

Belongs to the phosphatidylserine decarboxylase family. PSD-A subfamily. Heterodimer of a large membrane-associated beta subunit and a small pyruvoyl-containing alpha subunit. It depends on pyruvate as a cofactor. Is synthesized initially as an inactive proenzyme. Formation of the active enzyme involves a self-maturation process in which the active site pyruvoyl group is generated from an internal serine residue via an autocatalytic post-translational modification. Two non-identical subunits are generated from the proenzyme in this reaction, and the pyruvate is formed at the N-terminus of the alpha chain, which is derived from the carboxyl end of the proenzyme. The post-translation cleavage follows an unusual pathway, termed non-hydrolytic serinolysis, in which the side chain hydroxyl group of the serine supplies its oxygen atom to form the C-terminus of the beta chain, while the remainder of the serine residue undergoes an oxidative deamination to produce ammonia and the pyruvoyl prosthetic group on the alpha chain.

The protein localises to the cell membrane. It catalyses the reaction a 1,2-diacyl-sn-glycero-3-phospho-L-serine + H(+) = a 1,2-diacyl-sn-glycero-3-phosphoethanolamine + CO2. Its pathway is phospholipid metabolism; phosphatidylethanolamine biosynthesis; phosphatidylethanolamine from CDP-diacylglycerol: step 2/2. Functionally, catalyzes the formation of phosphatidylethanolamine (PtdEtn) from phosphatidylserine (PtdSer). This Nitrosomonas europaea (strain ATCC 19718 / CIP 103999 / KCTC 2705 / NBRC 14298) protein is Phosphatidylserine decarboxylase proenzyme.